The chain runs to 1146 residues: Error-prone DNA polymerase (1146 aa).

2 disordered regions span residues M1–K43 and A154–P178. The segment covering E12–P26 has biased composition (basic and acidic residues).

Belongs to the DNA polymerase type-C family. DnaE2 subfamily.

It localises to the cytoplasm. It catalyses the reaction DNA(n) + a 2'-deoxyribonucleoside 5'-triphosphate = DNA(n+1) + diphosphate. Functionally, DNA polymerase involved in damage-induced mutagenesis and translesion synthesis (TLS). It is not the major replicative DNA polymerase. The polypeptide is Error-prone DNA polymerase (Nocardia farcinica (strain IFM 10152)).